Consider the following 142-residue polypeptide: Ribosome-binding factor A (142 aa).

A compositionally biased stretch (basic and acidic residues) spans 120-130 (EVRRDIDHAPA). Residues 120-142 (EVRRDIDHAPAEDEFPTDGDDGQ) are disordered. Residues 131–142 (EDEFPTDGDDGQ) show a composition bias toward acidic residues.

The protein belongs to the RbfA family. Monomer. Binds 30S ribosomal subunits, but not 50S ribosomal subunits or 70S ribosomes.

It is found in the cytoplasm. Its function is as follows. One of several proteins that assist in the late maturation steps of the functional core of the 30S ribosomal subunit. Associates with free 30S ribosomal subunits (but not with 30S subunits that are part of 70S ribosomes or polysomes). Required for efficient processing of 16S rRNA. May interact with the 5'-terminal helix region of 16S rRNA. The sequence is that of Ribosome-binding factor A from Paramagnetospirillum magneticum (strain ATCC 700264 / AMB-1) (Magnetospirillum magneticum).